The sequence spans 436 residues: GTPase Der (436 aa).

EngA-type G domains follow at residues 4–167 and 176–351; these read PVVA…PKEE and VKFS…DNHS. Residues 10 to 17, 57 to 61, 119 to 122, 182 to 189, 229 to 233, and 294 to 297 each bind GTP; these read GRPNVGKS, DTGGI, NKVD, DTAGM, and NKWD. The KH-like domain occupies 352-436; it reads LRVQSSMLND…PIRVIARKRK (85 aa).

Belongs to the TRAFAC class TrmE-Era-EngA-EngB-Septin-like GTPase superfamily. EngA (Der) GTPase family. Associates with the 50S ribosomal subunit.

Functionally, GTPase that plays an essential role in the late steps of ribosome biogenesis. The protein is GTPase Der of Listeria innocua serovar 6a (strain ATCC BAA-680 / CLIP 11262).